Reading from the N-terminus, the 261-residue chain is Leucine-rich repeat-containing protein 61 (261 aa).

LRR repeat units follow at residues 54–75, 76–97, and 98–119; these read GLEW…ASLR, QLAV…AACE, and NLQC…QCLA. One can recognise an LRRCT domain in the interval 138–183; sequence NPLCASPCYWASVRELLPGLKVLDGERVSGRGSDFYQLCRDLDSSL.

This Bos taurus (Bovine) protein is Leucine-rich repeat-containing protein 61 (LRRC61).